The following is a 428-amino-acid chain: Histidine--tRNA ligase (428 aa).

It belongs to the class-II aminoacyl-tRNA synthetase family. Homodimer.

Its subcellular location is the cytoplasm. The catalysed reaction is tRNA(His) + L-histidine + ATP = L-histidyl-tRNA(His) + AMP + diphosphate + H(+). The protein is Histidine--tRNA ligase of Thermosynechococcus vestitus (strain NIES-2133 / IAM M-273 / BP-1).